We begin with the raw amino-acid sequence, 173 residues long: Translation initiation factor IF-3 (173 aa).

This sequence belongs to the IF-3 family. As to quaternary structure, monomer.

It localises to the cytoplasm. IF-3 binds to the 30S ribosomal subunit and shifts the equilibrium between 70S ribosomes and their 50S and 30S subunits in favor of the free subunits, thus enhancing the availability of 30S subunits on which protein synthesis initiation begins. The sequence is that of Translation initiation factor IF-3 from Aromatoleum aromaticum (strain DSM 19018 / LMG 30748 / EbN1) (Azoarcus sp. (strain EbN1)).